The primary structure comprises 441 residues: uncharacterized protein (441 aa).

11 consecutive transmembrane segments (helical) span residues 68–88 (MAIAGAFAVLFLPYSLLGPFA), 110–130 (ALIAGVGTILAVGAGDVPLLV), 131–151 (GALVANGLARFVASGLSAALP), 164–184 (SVAIASGAVSAFLGANFMLLP), 194–214 (GASAIVFLVAIPVSIALLWSL), 229–246 (AIHGSAVYAVVTGWLHGA), 260–280 (SGLAAHRMVVGINSLLILLLV), 287–307 (AVGGLGTALLFFAATGLGAFL), 337–357 (VAAAGLLVPVMVVCGFLLGVA), 384–404 (VQDALFWVSYILSITVAAALI), and 412–432 (VFVLFGSAIYLAGLVVHTIVG).

The protein belongs to the major facilitator superfamily.

The protein resides in the cell membrane. This is an uncharacterized protein from Mycobacterium tuberculosis (strain ATCC 25618 / H37Rv).